The sequence spans 281 residues: NAD kinase (281 aa).

Residue Asp61 is the Proton acceptor of the active site. Residues 61-62 (DG), 134-135 (ND), Arg145, Asp164, 175-180 (TAYSLS), and Gln234 each bind NAD(+).

The protein belongs to the NAD kinase family. A divalent metal cation is required as a cofactor.

Its subcellular location is the cytoplasm. The catalysed reaction is NAD(+) + ATP = ADP + NADP(+) + H(+). Involved in the regulation of the intracellular balance of NAD and NADP, and is a key enzyme in the biosynthesis of NADP. Catalyzes specifically the phosphorylation on 2'-hydroxyl of the adenosine moiety of NAD to yield NADP. The chain is NAD kinase from Clostridium botulinum (strain 657 / Type Ba4).